A 323-amino-acid polypeptide reads, in one-letter code: tRNA U34 carboxymethyltransferase (323 aa).

Carboxy-S-adenosyl-L-methionine contacts are provided by residues Lys-91, Trp-105, Lys-110, Gly-130, 181–182 (IE), Met-196, Tyr-200, and Arg-315.

It belongs to the class I-like SAM-binding methyltransferase superfamily. CmoB family. As to quaternary structure, homotetramer.

It catalyses the reaction carboxy-S-adenosyl-L-methionine + 5-hydroxyuridine(34) in tRNA = 5-carboxymethoxyuridine(34) in tRNA + S-adenosyl-L-homocysteine + H(+). Functionally, catalyzes carboxymethyl transfer from carboxy-S-adenosyl-L-methionine (Cx-SAM) to 5-hydroxyuridine (ho5U) to form 5-carboxymethoxyuridine (cmo5U) at position 34 in tRNAs. The chain is tRNA U34 carboxymethyltransferase from Yersinia pseudotuberculosis serotype IB (strain PB1/+).